Consider the following 348-residue polypeptide: Type IV methyl-directed restriction enzyme EcoKMcrBC (348 aa).

Its function is as follows. Modifies the specificity of McrB restriction by expanding the range of modified sequences restricted. Does not bind to DNA. This Escherichia coli (strain K12) protein is Type IV methyl-directed restriction enzyme EcoKMcrBC (mcrC).